We begin with the raw amino-acid sequence, 145 residues long: Large ribosomal subunit protein uL15 (145 aa).

Residues 1 to 42 are disordered; that stretch reads MELHTLKATPGSRKAKHRVGRGHAAGKGKQAGRGQSGQTKRS. Positions 13–26 are enriched in basic residues; that stretch reads RKAKHRVGRGHAAG.

It belongs to the universal ribosomal protein uL15 family. Part of the 50S ribosomal subunit.

In terms of biological role, binds to the 23S rRNA. This is Large ribosomal subunit protein uL15 from Metamycoplasma arthritidis (strain 158L3-1) (Mycoplasma arthritidis).